The primary structure comprises 690 residues: MGTTSDEMVSVEQTSSSSLNPLCFECGQQHWTRENHLYNYQNEVDDDLVCHICLQPLLQPLDTPCGHTFCYKCLRNFLQEKDFCPLDRKRLHFKLCKKSSILVHKLLDKLLVLCPFSSVCKDVMQRCDLEAHLKNRCPGASHRRVALERRKTSRTQAEIENENGPTLLDPAGTLSPEADCLGTGAVPVERHLTSASLSTWSEEPGLDNPAFEESAGADTTQQPLSLPEGEITTIEIHRSNPYIQLGISIVGGNETPLINIVIQEVYRDGVIARDGRLLAGDQILQVNNYNISNVSHNYARAVLSQPCNTLHLTVLRERRFGNRAHNHSDSNSPREEIFQVALHKRDSGEQLGIKLVRRTDEPGVFILDLLEGGLAAQDGRLSSNDRVLAINGHDLKYGTPELAAQIIQASGERVNLTIARPGKPQPGNTIREAGNHSSSSQHHTPPPYYSRPSSHKDLTQCVTCQEKHITVKKEPHESLGMTVAGGRGSKSGELPIFVTSVPPHGCLARDGRIKRGDVLLNINGIDLTNLSHSEAVAMLKASAASPAVALKALEVQIVEEATQNAEEQPSTFSENEYDASWSPSWVMWLGLPSTLHSCHDIVLRRSYLGSWGFSIVGGYEENHTNQPFFIKTIVLGTPAYYDGRLKCGDMIVAVNGLSTVGMSHSALVPMLKEQRNKVTLTVICWPGSLV.

The segment at 50 to 88 (CHICLQPLLQPLDTPCGHTFCYKCLRNFLQEKDFCPLDR) adopts an RING-type zinc-finger fold. The interval 198 to 224 (STWSEEPGLDNPAFEESAGADTTQQPL) is disordered. An NPXY motif motif is present at residues 208 to 211 (NPAF). PDZ domains lie at 233–318 (TIEI…LRER), 339–422 (QVAL…ARPG), 468–554 (HITV…KALE), and 600–688 (DIVL…WPGS). The segment at 418-455 (IARPGKPQPGNTIREAGNHSSSSQHHTPPPYYSRPSSH) is disordered.

As to quaternary structure, interacts with the phosphotyrosine interaction domain of NUMB.

The protein is Ligand of Numb protein X 2 (LNX2) of Homo sapiens (Human).